The sequence spans 20 residues: Fibrinogen beta chain (20 aa).

Over residues 1 to 12 (IIDYYDEGEEDR) the composition is skewed to acidic residues. A disordered region spans residues 1-20 (IIDYYDEGEEDRDVGVVDAR).

As to quaternary structure, heterohexamer; disulfide linked. Contains 2 sets of 3 non-identical chains (alpha, beta and gamma). The 2 heterotrimers are in head to head conformation with the N-termini in a small central domain. Conversion of fibrinogen to fibrin is triggered by thrombin, which cleaves fibrinopeptides A and B from alpha and beta chains, and thus exposes the N-terminal polymerization sites responsible for the formation of the soft clot.

It is found in the secreted. Functionally, cleaved by the protease thrombin to yield monomers which, together with fibrinogen alpha (FGA) and fibrinogen gamma (FGG), polymerize to form an insoluble fibrin matrix. Fibrin has a major function in hemostasis as one of the primary components of blood clots. In addition, functions during the early stages of wound repair to stabilize the lesion and guide cell migration during re-epithelialization. Was originally thought to be essential for platelet aggregation, based on in vitro studies using anticoagulated blood. However subsequent studies have shown that it is not absolutely required for thrombus formation in vivo. Enhances expression of SELP in activated platelets. Maternal fibrinogen is essential for successful pregnancy. Fibrin deposition is also associated with infection, where it protects against IFNG-mediated hemorrhage. May also facilitate the antibacterial immune response via both innate and T-cell mediated pathways. The chain is Fibrinogen beta chain (FGB) from Felis catus (Cat).